The following is a 94-amino-acid chain: CRISPR-associated endoribonuclease Cas2 (94 aa).

Residue Asp-11 coordinates Mg(2+).

The protein belongs to the CRISPR-associated endoribonuclease Cas2 protein family. In terms of assembly, homodimer, forms a heterotetramer with a Cas1 homodimer. Mg(2+) serves as cofactor.

Functionally, CRISPR (clustered regularly interspaced short palindromic repeat), is an adaptive immune system that provides protection against mobile genetic elements (viruses, transposable elements and conjugative plasmids). CRISPR clusters contain sequences complementary to antecedent mobile elements and target invading nucleic acids. CRISPR clusters are transcribed and processed into CRISPR RNA (crRNA). Functions as a ssRNA-specific endoribonuclease. Involved in the integration of spacer DNA into the CRISPR cassette. The sequence is that of CRISPR-associated endoribonuclease Cas2 from Allochromatium vinosum (strain ATCC 17899 / DSM 180 / NBRC 103801 / NCIMB 10441 / D) (Chromatium vinosum).